The sequence spans 258 residues: Acyl-[acyl-carrier-protein]--UDP-N-acetylglucosamine O-acyltransferase (258 aa).

The protein belongs to the transferase hexapeptide repeat family. LpxA subfamily. Homotrimer.

It is found in the cytoplasm. It catalyses the reaction a (3R)-hydroxyacyl-[ACP] + UDP-N-acetyl-alpha-D-glucosamine = a UDP-3-O-[(3R)-3-hydroxyacyl]-N-acetyl-alpha-D-glucosamine + holo-[ACP]. Its pathway is glycolipid biosynthesis; lipid IV(A) biosynthesis; lipid IV(A) from (3R)-3-hydroxytetradecanoyl-[acyl-carrier-protein] and UDP-N-acetyl-alpha-D-glucosamine: step 1/6. Involved in the biosynthesis of lipid A, a phosphorylated glycolipid that anchors the lipopolysaccharide to the outer membrane of the cell. The protein is Acyl-[acyl-carrier-protein]--UDP-N-acetylglucosamine O-acyltransferase of Thiobacillus denitrificans (strain ATCC 25259 / T1).